Consider the following 202-residue polypeptide: Holliday junction resolvase RecU (202 aa).

Positions 85, 87, 100, and 119 each coordinate Mg(2+).

It belongs to the RecU family. Mg(2+) serves as cofactor.

Its subcellular location is the cytoplasm. The enzyme catalyses Endonucleolytic cleavage at a junction such as a reciprocal single-stranded crossover between two homologous DNA duplexes (Holliday junction).. In terms of biological role, endonuclease that resolves Holliday junction intermediates in genetic recombination. Cleaves mobile four-strand junctions by introducing symmetrical nicks in paired strands. Promotes annealing of linear ssDNA with homologous dsDNA. Required for DNA repair, homologous recombination and chromosome segregation. This chain is Holliday junction resolvase RecU, found in Streptococcus equi subsp. zooepidemicus (strain H70).